Consider the following 465-residue polypeptide: GDNF family receptor alpha-1 (465 aa).

A signal peptide spans M1–G24. A run of 3 repeats spans residues D25–N113, K150–R238, and E239–I342. The cysteines at positions 36 and 42 are disulfide-linked. An N-linked (GlcNAc...) asparagine glycan is attached at N59. Intrachain disulfides connect C154–C214, C161–C167, C178–C192, C187–C233, C216–C221, C243–C313, C250–C256, C267–C285, C277–C337, and C315–C325. N-linked (GlcNAc...) asparagine glycans are attached at residues N347 and N406. The GPI-anchor amidated serine moiety is linked to residue S429. Positions H430 to S465 are cleaved as a propeptide — removed in mature form.

It belongs to the GDNFR family. As to quaternary structure, interacts with GDNF ligand and RET: forms a 2:2:2 ternary complex composed of GDNF ligand, GFRA1 and RET receptor. Interacts with SORL1, either alone or in complex with GDNF. Interaction between SORL1 and GFRA1 leads to GFRA1 internalization, but not degradation.

Its subcellular location is the cell membrane. It is found in the golgi apparatus. The protein localises to the trans-Golgi network. The protein resides in the endosome. It localises to the multivesicular body. Coreceptor for GDNF, a neurotrophic factor that enhances survival and morphological differentiation of dopaminergic neurons and increases their high-affinity dopamine uptake. GDNF-binding leads to autophosphorylation and activation of the RET receptor. This is GDNF family receptor alpha-1 (GFRA1) from Homo sapiens (Human).